The sequence spans 240 residues: Short palate, lung and nasal epithelium carcinoma-associated protein 2B (240 aa).

A signal peptide spans 1 to 19 (MVQLWKLVLLCGLLAGTSA). Cys-163 and Cys-206 are disulfide-bonded.

The protein belongs to the BPI/LBP/Plunc superfamily. Plunc family. In terms of tissue distribution, parotid glands.

It is found in the secreted. In Bos taurus (Bovine), this protein is Short palate, lung and nasal epithelium carcinoma-associated protein 2B (SPLUNC2B).